The sequence spans 253 residues: MTRVDLNADMGESFGPWKMGDDDSLLKIITSANIACGFHAGDPDVMAKTMALAAENGVGIGAHPGFPDLQGFGRRNMKVPHDSLRNLVRYQLGAALGMARAVGTQVRHLKLHGALANMCSVDQDMARACYQGALDVDPDIIIMVLAVTKQEQAVRELGCKWVGEIFADRAYNDDGTLVDRALPGAVIHDPDLAGPRMLKMVRAGAIITESGKHLETSVDTICLHGDGPTAVQIARSVRACLEEGGVSVTAFER.

It belongs to the LamB/PxpA family. Forms a complex composed of PxpA, PxpB and PxpC.

It carries out the reaction 5-oxo-L-proline + ATP + 2 H2O = L-glutamate + ADP + phosphate + H(+). Its function is as follows. Catalyzes the cleavage of 5-oxoproline to form L-glutamate coupled to the hydrolysis of ATP to ADP and inorganic phosphate. The chain is 5-oxoprolinase subunit A from Ruegeria pomeroyi (strain ATCC 700808 / DSM 15171 / DSS-3) (Silicibacter pomeroyi).